We begin with the raw amino-acid sequence, 343 residues long: tRNA N6-adenosine threonylcarbamoyltransferase (343 aa).

2 residues coordinate Fe cation: histidine 120 and histidine 124. Residues 142–146 (VVSGG), aspartate 175, glycine 188, aspartate 192, and asparagine 281 each bind substrate. Position 310 (aspartate 310) interacts with Fe cation.

It belongs to the KAE1 / TsaD family. Requires Fe(2+) as cofactor.

The protein resides in the cytoplasm. The catalysed reaction is L-threonylcarbamoyladenylate + adenosine(37) in tRNA = N(6)-L-threonylcarbamoyladenosine(37) in tRNA + AMP + H(+). In terms of biological role, required for the formation of a threonylcarbamoyl group on adenosine at position 37 (t(6)A37) in tRNAs that read codons beginning with adenine. Is involved in the transfer of the threonylcarbamoyl moiety of threonylcarbamoyl-AMP (TC-AMP) to the N6 group of A37, together with TsaE and TsaB. TsaD likely plays a direct catalytic role in this reaction. This chain is tRNA N6-adenosine threonylcarbamoyltransferase, found in Bacillus anthracis.